The chain runs to 93 residues: Large ribosomal subunit protein uL23cz/uL23cy (93 aa).

It belongs to the universal ribosomal protein uL23 family. As to quaternary structure, part of the 50S ribosomal subunit.

The protein localises to the plastid. The protein resides in the chloroplast. Functionally, binds to 23S rRNA. The sequence is that of Large ribosomal subunit protein uL23cz/uL23cy (rpl23-A) from Nymphaea alba (White water-lily).